A 221-amino-acid chain; its full sequence is UPF0758 protein YicR (221 aa).

Residues 99 to 221 enclose the MPN domain; it reads ALLSPEMTRE…YVSFAERGWI (123 aa). Histidine 170, histidine 172, and aspartate 183 together coordinate Zn(2+). A JAMM motif motif is present at residues 170–183; the sequence is HNHPSGCAEPSKAD.

The protein belongs to the UPF0758 family. YicR subfamily.

This is UPF0758 protein YicR from Salmonella newport (strain SL254).